The sequence spans 143 residues: Small ribosomal subunit protein uS12 (143 aa).

A compositionally biased stretch (basic residues) spans 1-20 (MGKCRGLRTARKLRSHRRDQ). The interval 1–26 (MGKCRGLRTARKLRSHRRDQKWHDKQ) is disordered. A Glycyl lysine isopeptide (Lys-Gly) (interchain with G-Cter in SUMO2) cross-link involves residue Lys37. Lys54 carries the post-translational modification N6-succinyllysine. The residue at position 62 (Pro62) is a 3-hydroxyproline. Lys135 is subject to N6-acetyllysine.

Belongs to the universal ribosomal protein uS12 family. As to quaternary structure, component of the 40S small ribosomal subunit. Part of the small subunit (SSU) processome, composed of more than 70 proteins and the RNA chaperone small nucleolar RNA (snoRNA) U3. In terms of processing, hydroxylation at Pro-62 affects translation termination efficiency.

It is found in the cytoplasm. The protein localises to the cytosol. Its subcellular location is the rough endoplasmic reticulum. The protein resides in the nucleus. It localises to the nucleolus. Its function is as follows. Component of the ribosome, a large ribonucleoprotein complex responsible for the synthesis of proteins in the cell. The small ribosomal subunit (SSU) binds messenger RNAs (mRNAs) and translates the encoded message by selecting cognate aminoacyl-transfer RNA (tRNA) molecules. The large subunit (LSU) contains the ribosomal catalytic site termed the peptidyl transferase center (PTC), which catalyzes the formation of peptide bonds, thereby polymerizing the amino acids delivered by tRNAs into a polypeptide chain. The nascent polypeptides leave the ribosome through a tunnel in the LSU and interact with protein factors that function in enzymatic processing, targeting, and the membrane insertion of nascent chains at the exit of the ribosomal tunnel. Plays an important role in translational accuracy. Part of the small subunit (SSU) processome, first precursor of the small eukaryotic ribosomal subunit. During the assembly of the SSU processome in the nucleolus, many ribosome biogenesis factors, an RNA chaperone and ribosomal proteins associate with the nascent pre-rRNA and work in concert to generate RNA folding, modifications, rearrangements and cleavage as well as targeted degradation of pre-ribosomal RNA by the RNA exosome. This Bos taurus (Bovine) protein is Small ribosomal subunit protein uS12 (RPS23).